We begin with the raw amino-acid sequence, 33 residues long: Cytochrome b6-f complex subunit 8 (33 aa).

The helical transmembrane segment at Ile2–Val22 threads the bilayer.

It belongs to the PetN family. As to quaternary structure, the 4 large subunits of the cytochrome b6-f complex are cytochrome b6, subunit IV (17 kDa polypeptide, PetD), cytochrome f and the Rieske protein, while the 4 small subunits are PetG, PetL, PetM and PetN. The complex functions as a dimer.

It is found in the cellular thylakoid membrane. Its function is as follows. Component of the cytochrome b6-f complex, which mediates electron transfer between photosystem II (PSII) and photosystem I (PSI), cyclic electron flow around PSI, and state transitions. This chain is Cytochrome b6-f complex subunit 8, found in Prochlorococcus marinus (strain NATL2A).